Reading from the N-terminus, the 384-residue chain is Putative 8-amino-7-oxononanoate synthase (384 aa).

A substrate-binding site is contributed by R22. Residue 109–110 (GY) participates in pyridoxal 5'-phosphate binding. Substrate is bound at residue H134. Pyridoxal 5'-phosphate is bound by residues S182, 207 to 210 (DDAH), and 236 to 239 (TLSK). K239 carries the post-translational modification N6-(pyridoxal phosphate)lysine. Position 348 (T348) interacts with substrate.

This sequence belongs to the class-II pyridoxal-phosphate-dependent aminotransferase family. BioF subfamily. In terms of assembly, homodimer. Pyridoxal 5'-phosphate is required as a cofactor.

The catalysed reaction is 6-carboxyhexanoyl-[ACP] + L-alanine + H(+) = (8S)-8-amino-7-oxononanoate + holo-[ACP] + CO2. It participates in cofactor biosynthesis; biotin biosynthesis. In terms of biological role, catalyzes the decarboxylative condensation of pimeloyl-[acyl-carrier protein] and L-alanine to produce 8-amino-7-oxononanoate (AON), [acyl-carrier protein], and carbon dioxide. This Caulobacter vibrioides (strain ATCC 19089 / CIP 103742 / CB 15) (Caulobacter crescentus) protein is Putative 8-amino-7-oxononanoate synthase (bioF).